The sequence spans 363 residues: Type 3 secretion system translocon protein SctB (363 aa).

Residues isoleucine 99–leucine 120 form a helical membrane-spanning segment.

This sequence belongs to the SctB/SipC family. The core secretion machinery of the T3SS is composed of approximately 20 different proteins, including cytoplasmic components, a base, an export apparatus and a needle. This subunit is involved in the formation of a pore, called the translocon, in host membrane.

It localises to the secreted. Its subcellular location is the host membrane. Its function is as follows. Component of the type III secretion system (T3SS), also called injectisome, which is used to inject bacterial effector proteins into eukaryotic host cells. IpaB/SctE and IpaC/SctB are inserted into the host membrane where they form a pore and allow the translocation of effector proteins into the cytosol of target cells. The sequence is that of Type 3 secretion system translocon protein SctB from Shigella dysenteriae.